The chain runs to 153 residues: Arginine repressor (153 aa).

This sequence belongs to the ArgR family.

The protein localises to the cytoplasm. The protein operates within amino-acid biosynthesis; L-arginine biosynthesis [regulation]. Functionally, regulates arginine biosynthesis genes. The sequence is that of Arginine repressor from Actinobacillus pleuropneumoniae serotype 5b (strain L20).